The chain runs to 432 residues: Trigger factor (432 aa).

The PPIase FKBP-type domain maps to 161-246 (EDRVVIDFVG…LKKVEVMVLP (86 aa)).

It belongs to the FKBP-type PPIase family. Tig subfamily.

It is found in the cytoplasm. It carries out the reaction [protein]-peptidylproline (omega=180) = [protein]-peptidylproline (omega=0). Involved in protein export. Acts as a chaperone by maintaining the newly synthesized protein in an open conformation. Functions as a peptidyl-prolyl cis-trans isomerase. The chain is Trigger factor (tig) from Pasteurella multocida (strain Pm70).